Here is a 115-residue protein sequence, read N- to C-terminus: NTF2-related export protein 1 (115 aa).

The 109-residue stretch at 7-115 (YAQEFVQRYY…LVLRSSTNFL (109 aa)) folds into the NTF2 domain.

It is found in the nucleus. In terms of biological role, stimulator of protein export for NES-containing proteins. Also plays a role in mRNA nuclear export. In Schizosaccharomyces pombe (strain 972 / ATCC 24843) (Fission yeast), this protein is NTF2-related export protein 1 (nxt1).